Consider the following 165-residue polypeptide: Nucleotide-binding protein Ctha_0558 (165 aa).

The protein belongs to the YajQ family.

In terms of biological role, nucleotide-binding protein. The polypeptide is Nucleotide-binding protein Ctha_0558 (Chloroherpeton thalassium (strain ATCC 35110 / GB-78)).